A 60-amino-acid polypeptide reads, in one-letter code: Large ribosomal subunit protein bL32 (60 aa).

The interval 1–60 (MAVQQVKKSRSKRDMRRSHDSLTGPTLSTDKSTGELHLRHHVSPNGFYKGKKVVDTKSED) is disordered. The segment covering 7-16 (KKSRSKRDMR) has biased composition (basic residues).

Belongs to the bacterial ribosomal protein bL32 family.

This chain is Large ribosomal subunit protein bL32, found in Francisella philomiragia subsp. philomiragia (strain ATCC 25017 / CCUG 19701 / FSC 153 / O#319-036).